We begin with the raw amino-acid sequence, 386 residues long: Eukaryotic translation initiation factor 3 subunit M (386 aa).

A PCI domain is found at 181-343 (NSELASKVMI…RKVHISSTMH (163 aa)).

This sequence belongs to the eIF-3 subunit M family. In terms of assembly, component of the eukaryotic translation initiation factor 3 (eIF-3) complex.

The protein localises to the cytoplasm. Functionally, component of the eukaryotic translation initiation factor 3 (eIF-3) complex, which is involved in protein synthesis of a specialized repertoire of mRNAs and, together with other initiation factors, stimulates binding of mRNA and methionyl-tRNAi to the 40S ribosome. The eIF-3 complex specifically targets and initiates translation of a subset of mRNAs involved in cell proliferation. This is Eukaryotic translation initiation factor 3 subunit M from Culex quinquefasciatus (Southern house mosquito).